The chain runs to 511 residues: Phosphoenolpyruvate carboxylase (511 aa).

Belongs to the PEPCase type 2 family. In terms of assembly, homotetramer. The cofactor is Mg(2+).

It carries out the reaction oxaloacetate + phosphate = phosphoenolpyruvate + hydrogencarbonate. Its function is as follows. Catalyzes the irreversible beta-carboxylation of phosphoenolpyruvate (PEP) to form oxaloacetate (OAA), a four-carbon dicarboxylic acid source for the tricarboxylic acid cycle. The sequence is that of Phosphoenolpyruvate carboxylase from Saccharolobus islandicus (strain Y.N.15.51 / Yellowstone #2) (Sulfolobus islandicus).